Reading from the N-terminus, the 532-residue chain is Berberine bridge enzyme-like 18 (532 aa).

The N-terminal stretch at 1 to 29 (MKFQSFFSSVLIFFTTSTLLLSIPHPVSA) is a signal peptide. Asparagine 30, asparagine 33, asparagine 46, asparagine 59, asparagine 147, asparagine 169, and asparagine 262 each carry an N-linked (GlcNAc...) asparagine glycan. Cysteine 40 and cysteine 102 are disulfide-bonded. In terms of domain architecture, FAD-binding PCMH-type spans 80–254 (DVPKPVLILT…LSWKIGLINV (175 aa)). Positions 117–179 (HDYEGLSYVT…RTLAFPAGVC (63 aa)) form a cross-link, 6-(S-cysteinyl)-8alpha-(pros-histidyl)-FAD (His-Cys).

The protein belongs to the oxygen-dependent FAD-linked oxidoreductase family. Requires FAD as cofactor. In terms of processing, the FAD cofactor is bound via a bicovalent 6-S-cysteinyl, 8alpha-N1-histidyl FAD linkage.

Its subcellular location is the secreted. It is found in the cell wall. This is Berberine bridge enzyme-like 18 from Arabidopsis thaliana (Mouse-ear cress).